Here is a 609-residue protein sequence, read N- to C-terminus: Numb-like protein (609 aa).

Disordered stretches follow at residues Met-1–Ala-68, Gly-223–Ala-283, Ala-372–Ser-421, Gln-434–Pro-464, and Ala-537–Leu-609. A compositionally biased stretch (pro residues) spans Pro-19–Pro-29. A PID domain is found at Arg-74–Gly-223. 2 positions are modified to phosphoserine: Ser-224 and Ser-228. Residues Pro-233–Glu-245 are compositionally biased toward basic and acidic residues. Over residues Ala-246 to Pro-259 the composition is skewed to low complexity. Phosphoserine is present on Ser-263. Thr-279 is subject to Phosphothreonine. Residues Thr-409–Glu-418 show a composition bias toward basic and acidic residues. Residue Ser-411 is modified to Phosphoserine. Positions Gln-434–Gln-446 are enriched in low complexity. Composition is skewed to pro residues over residues Pro-454–Pro-464 and Asn-558–Glu-573.

Interacts (via PTB domain) with MAP3K7IP2 (via C-terminal). Interacts (via C-terminal) with TRAF6 (via TRAF domains). Associates with EPS15 and NOTCH1.

It is found in the cytoplasm. Functionally, plays a role in the process of neurogenesis. Required throughout embryonic neurogenesis to maintain neural progenitor cells, also called radial glial cells (RGCs), by allowing their daughter cells to choose progenitor over neuronal cell fate. Not required for the proliferation of neural progenitor cells before the onset of embryonic neurogenesis. Also required postnatally in the subventricular zone (SVZ) neurogenesis by regulating SVZ neuroblasts survival and ependymal wall integrity. Negative regulator of NF-kappa-B signaling pathway. The inhibition of NF-kappa-B activation is mediated at least in part, by preventing MAP3K7IP2 to interact with polyubiquitin chains of TRAF6 and RIPK1 and by stimulating the 'Lys-48'-linked polyubiquitination and degradation of TRAF6 in cortical neurons. The polypeptide is Numb-like protein (NUMBL) (Homo sapiens (Human)).